The following is a 201-amino-acid chain: Extracellular superoxide dismutase [Cu-Zn] (201 aa).

The signal sequence occupies residues 1-42 (MINSFIVIFLSFLIFINYANLVCVEATHVYGRRSHSNGMHGN). The Cu cation site is built by His89, His91, and His106. The cysteines at positions 100 and 192 are disulfide-linked. The Zn(2+) site is built by His106, His114, His123, and Asp126. His163 contributes to the Cu cation binding site.

The protein belongs to the Cu-Zn superoxide dismutase family. As to quaternary structure, homodimer. The cofactor is Cu cation. Zn(2+) serves as cofactor.

The protein resides in the secreted. It is found in the extracellular space. It catalyses the reaction 2 superoxide + 2 H(+) = H2O2 + O2. Destroys radicals which are normally produced within the cells and which are toxic to biological systems. May act in the parasite defense against phagocyte-generated reactive oxygen species. This Onchocerca volvulus protein is Extracellular superoxide dismutase [Cu-Zn] (sod-4).